A 162-amino-acid polypeptide reads, in one-letter code: Probable chemoreceptor glutamine deamidase CheD (162 aa).

This sequence belongs to the CheD family.

It carries out the reaction L-glutaminyl-[protein] + H2O = L-glutamyl-[protein] + NH4(+). Functionally, probably deamidates glutamine residues to glutamate on methyl-accepting chemotaxis receptors (MCPs), playing an important role in chemotaxis. This is Probable chemoreceptor glutamine deamidase CheD from Clostridium novyi (strain NT).